The sequence spans 252 residues: Ubiquinone biosynthesis O-methyltransferase (252 aa).

S-adenosyl-L-methionine-binding residues include Arg45, Gly76, Asp97, and Met141.

It belongs to the methyltransferase superfamily. UbiG/COQ3 family.

It catalyses the reaction a 3-demethylubiquinol + S-adenosyl-L-methionine = a ubiquinol + S-adenosyl-L-homocysteine + H(+). The catalysed reaction is a 3-(all-trans-polyprenyl)benzene-1,2-diol + S-adenosyl-L-methionine = a 2-methoxy-6-(all-trans-polyprenyl)phenol + S-adenosyl-L-homocysteine + H(+). Its pathway is cofactor biosynthesis; ubiquinone biosynthesis. O-methyltransferase that catalyzes the 2 O-methylation steps in the ubiquinone biosynthetic pathway. The chain is Ubiquinone biosynthesis O-methyltransferase from Caulobacter sp. (strain K31).